The sequence spans 250 residues: Proteasome subunit alpha type-8 (250 aa).

The protein belongs to the peptidase T1A family. In terms of assembly, component of the outer alpha-ring of the 20S proteasome core which is composed of 28 subunits that are arranged in four stacked rings, resulting in a barrel-shaped structure. The catalytic chamber with the active sites is on the inside of the barrel. Interacts with canonical subunits of the spermatoproteasome, including proteasome activators PSME4 (also called PA200) and PSME3 (also called PA28-gamma). Interacts with proteasome-interacting proteins chaperones including CCT6B and CCT2, ubiquitin ligases (TRIP12, NEDD4, TRIM36 and RAD18), and ubiquitin specific proteases such as USP9X, USP34, USP5 and USP47. Interacts with meiotic proteins cyclin dependent kinase CDK1 and the ATPase TRIP13 as well as proteins of the synaptonemal complex SIX6OS1 and SYCE3.

Its subcellular location is the nucleus. Its function is as follows. Component of the spermatoproteasome, a proteasome specifically found in testis that promotes acetylation-dependent degradation of histones, thereby participating actively to the exchange of histones during spermatogenesis. The proteasome is a protein complex that degrades unneeded or damaged proteins by proteolysis, a chemical reaction that breaks peptide bonds. Required for 20S core proteasome assembly, essential for the degradation of meiotic proteins RAD51 and RPA1 at late prophase I and the progression of meiosis I during spermatogenesis. Localizes to the synaptonemal complex, a 'zipper'-like structure that holds homologous chromosome pairs in synapsis during meiotic prophase I. This is Proteasome subunit alpha type-8 from Mus musculus (Mouse).